The sequence spans 373 residues: Probable tRNA sulfurtransferase (373 aa).

Positions 54–158 (NKNIEELSKV…NDVAYFYYKI (105 aa)) constitute a THUMP domain. ATP is bound by residues 176–177 (LF), 201–202 (NF), Lys256, Gly278, and Gln287.

The protein belongs to the ThiI family.

The protein resides in the cytoplasm. It carries out the reaction [ThiI sulfur-carrier protein]-S-sulfanyl-L-cysteine + a uridine in tRNA + 2 reduced [2Fe-2S]-[ferredoxin] + ATP + H(+) = [ThiI sulfur-carrier protein]-L-cysteine + a 4-thiouridine in tRNA + 2 oxidized [2Fe-2S]-[ferredoxin] + AMP + diphosphate. The catalysed reaction is [ThiS sulfur-carrier protein]-C-terminal Gly-Gly-AMP + S-sulfanyl-L-cysteinyl-[cysteine desulfurase] + AH2 = [ThiS sulfur-carrier protein]-C-terminal-Gly-aminoethanethioate + L-cysteinyl-[cysteine desulfurase] + A + AMP + 2 H(+). The protein operates within cofactor biosynthesis; thiamine diphosphate biosynthesis. Catalyzes the ATP-dependent transfer of a sulfur to tRNA to produce 4-thiouridine in position 8 of tRNAs, which functions as a near-UV photosensor. Also catalyzes the transfer of sulfur to the sulfur carrier protein ThiS, forming ThiS-thiocarboxylate. This is a step in the synthesis of thiazole, in the thiamine biosynthesis pathway. The sulfur is donated as persulfide by IscS. This chain is Probable tRNA sulfurtransferase, found in Saccharolobus islandicus (strain Y.N.15.51 / Yellowstone #2) (Sulfolobus islandicus).